The primary structure comprises 591 residues: Frizzled and smoothened-like protein F (591 aa).

An N-terminal signal peptide occupies residues 1 to 17 (MKILIIFIIFIISYISG). Residues 18–244 (FEIPKGFGIG…KWDQLLTMSK (227 aa)) are Extracellular-facing. Residues 30-177 (IPDAECLNYI…GTFAVPCSDP (148 aa)) enclose the FZ domain. Intrachain disulfides connect C35/C105, C48/C98, and C123/C174. N167, N187, N202, and N230 each carry an N-linked (GlcNAc...) asparagine glycan. The chain crosses the membrane as a helical span at residues 245-265 (ILSTISFILSLYNVLTFGIIN). The Cytoplasmic segment spans residues 266–275 (KKVSDPHKCT). The chain crosses the membrane as a helical span at residues 276–296 (CFFSGSIALVNLCDIITYGIG). At 297 to 321 (YEELLCPEPGRSAKQQLDPVCGLTG) the chain is on the extracellular side. A helical transmembrane segment spans residues 322 to 342 (AFFHLGITYCVLWSMTMGLVL). At 343 to 353 (YCSVKRQKWFK) the chain is on the cytoplasmic side. A helical transmembrane segment spans residues 354–374 (FNYFLIGNTTFTITTVVIAAA). At 375–397 (TSKFEAGLGSIECWIRDRWYAIS) the chain is on the extracellular side. A helical membrane pass occupies residues 398–418 (LFWIPCGIALLIGSFCIIAVI). Residues 419–442 (HEVYKTSKKSISNRNDLLQRELKP) lie on the Cytoplasmic side of the membrane. Residues 443–463 (LLIVIFISGSFLYLFIFFFDI) traverse the membrane as a helical segment. Over 464 to 495 (ERKFGGYRSAVEDYVLCLLNGSQEECFTTGPS) the chain is Extracellular. N-linked (GlcNAc...) asparagine glycosylation occurs at N483. The helical transmembrane segment at 496–516 (YVPYFLFYLVIRWFGIIFFLF) threads the bilayer. At 517–591 (YGTSNIARKI…AVELESIKIN (75 aa)) the chain is on the cytoplasmic side. A compositionally biased stretch (low complexity) spans 538–571 (SSISPKSTPKSSPKNSDSKINSNSTNNNNMILND). Positions 538–573 (SSISPKSTPKSSPKNSDSKINSNSTNNNNMILNDNN) are disordered.

The protein belongs to the G-protein coupled receptor Fz/Smo family.

Its subcellular location is the membrane. In Dictyostelium discoideum (Social amoeba), this protein is Frizzled and smoothened-like protein F (fslF).